Here is a 250-residue protein sequence, read N- to C-terminus: DNA repair protein RecO (250 aa).

This sequence belongs to the RecO family.

Functionally, involved in DNA repair and RecF pathway recombination. This Syntrophobacter fumaroxidans (strain DSM 10017 / MPOB) protein is DNA repair protein RecO.